A 372-amino-acid polypeptide reads, in one-letter code: Germination protease (372 aa).

Residues 1–15 constitute a propeptide that is removed on maturation; it reads MNRSIDLSMYSVRTD.

This sequence belongs to the peptidase A25 family. Homotetramer. Post-translationally, autoproteolytically processed. The inactive tetrameric zymogen termed p46 autoprocesses to a smaller form termed p41, which is active only during spore germination.

The enzyme catalyses Endopeptidase action with P4 Glu or Asp, P1 preferably Glu &gt; Asp, P1' hydrophobic and P2' Ala.. Functionally, initiates the rapid degradation of small, acid-soluble proteins during spore germination. This chain is Germination protease, found in Geobacillus sp. (strain WCH70).